A 409-amino-acid polypeptide reads, in one-letter code: Killer cell lectin-like receptor subfamily G member 2 (409 aa).

The disordered stretch occupies residues 1-120 (MEESWEAAPG…GAEPAPSAWA (120 aa)). Over residues 41-53 (PEGPESSPSPAGA) the composition is skewed to low complexity. A compositionally biased stretch (pro residues) spans 72–81 (SPRPGSPRVP). Residues 104-120 (PRNGEAPGAEPAPSAWA) are compositionally biased toward low complexity. A Phosphoserine modification is found at Ser-158. Residues 193-216 (TESGCDAEGRASPAEGSAGSPGSP) are disordered. The span at 202 to 216 (RASPAEGSAGSPGSP) shows a compositional bias: low complexity. Residues 263–283 (WALAFMAVLLAVSGVVIVVLA) traverse the membrane as a helical segment. In terms of domain architecture, C-type lectin spans 300–405 (SEEHCYYFSA…CSTPRPWVCA (106 aa)). Cystine bridges form between Cys-321–Cys-404 and Cys-383–Cys-396.

It localises to the membrane. The chain is Killer cell lectin-like receptor subfamily G member 2 (KLRG2) from Homo sapiens (Human).